The chain runs to 101 residues: uncharacterized protein (101 aa).

The chain crosses the membrane as a helical span at residues 58 to 80 (VFPSLNIIILMSDALMFFLRSSI).

It is found in the membrane. This is an uncharacterized protein from Saccharomyces cerevisiae (strain ATCC 204508 / S288c) (Baker's yeast).